A 327-amino-acid chain; its full sequence is PDZ and LIM domain protein 1 (327 aa).

At T2 the chain carries N-acetylthreonine. Residues 3–85 enclose the PDZ domain; the sequence is TQQIVLQGPG…NMTLTVSRSE (83 aa). Phosphoserine occurs at positions 90 and 130. Y142 is subject to Phosphotyrosine. A disordered region spans residues 161–184; the sequence is VESKTSASGEEANSRPVVQPHPSG. One can recognise an LIM zinc-binding domain in the interval 256-315; it reads PICDKCGTGIVGVFVKLRDHHRHPECYVCTDCGINLKQKGHFFVEDQIYCEKHARERVTP. Zn(2+) contacts are provided by C258, C261, H278, C281, C284, C287, C305, and H308. At T314 the chain carries Phosphothreonine. Y319 carries the phosphotyrosine modification.

As to quaternary structure, interacts with ACTN1, ACTN2 and ACTN4. Interacts with PDLIM4. Expressed in heart, lung, spleen, testis and skeletal muscle.

It localises to the cytoplasm. The protein resides in the cytoskeleton. The protein localises to the myofibril. It is found in the sarcomere. Its subcellular location is the z line. Functionally, cytoskeletal protein that may act as an adapter that brings other proteins (like kinases) to the cytoskeleton. Involved in assembly, disassembly and directioning of stress fibers in fibroblasts. Required for the localization of ACTN1 and PALLD to stress fibers. Required for cell migration and in maintaining cell polarity of fibroblasts. This Mus musculus (Mouse) protein is PDZ and LIM domain protein 1 (Pdlim1).